Reading from the N-terminus, the 127-residue chain is Fluoride-specific ion channel FluC (127 aa).

The next 4 helical transmembrane spans lie at 4–24, 35–55, 71–91, and 101–121; these read IMLAVFLGGGTGSVLRWWLGL, VGTLTANLAGAFIIGAGLAWF, TGLCGGLTTFSTFSAEVVFLL, and LNVALNLFGSFMMTALAFWLF. 2 residues coordinate Na(+): Gly-75 and Thr-78.

Belongs to the fluoride channel Fluc/FEX (TC 1.A.43) family.

The protein resides in the cell inner membrane. The enzyme catalyses fluoride(in) = fluoride(out). Na(+) is not transported, but it plays an essential structural role and its presence is essential for fluoride channel function. Functionally, fluoride-specific ion channel. Important for reducing fluoride concentration in the cell, thus reducing its toxicity. The protein is Fluoride-specific ion channel FluC of Cronobacter sakazakii (strain ATCC BAA-894) (Enterobacter sakazakii).